A 127-amino-acid polypeptide reads, in one-letter code: Fluoride-specific ion channel FluC 1 (127 aa).

The next 4 helical transmembrane spans lie at 3–23 (LLIV…VGQW), 35–55 (IAML…FGLY), 74–94 (IGFF…VLLI), and 102–122 (LFSY…LGFY). Positions 78 and 81 each coordinate Na(+).

The protein belongs to the fluoride channel Fluc/FEX (TC 1.A.43) family.

The protein localises to the cell membrane. The catalysed reaction is fluoride(in) = fluoride(out). Na(+) is not transported, but it plays an essential structural role and its presence is essential for fluoride channel function. Its function is as follows. Fluoride-specific ion channel. Important for reducing fluoride concentration in the cell, thus reducing its toxicity. In Halalkalibacterium halodurans (strain ATCC BAA-125 / DSM 18197 / FERM 7344 / JCM 9153 / C-125) (Bacillus halodurans), this protein is Fluoride-specific ion channel FluC 1.